Consider the following 405-residue polypeptide: Secreted aspartic protease FUS4 (405 aa).

A signal peptide spans 1 to 24 (MLAIATLHVALQVFGAFSLSHAAA). Residues 49–400 (YLFNVTVGSP…NFEERSFGLA (352 aa)) form the Peptidase A1 domain. Residues Asn52, Asn61, Asn107, and Asn123 are each glycosylated (N-linked (GlcNAc...) asparagine). A disulfide bridge connects residues Cys318 and Cys356.

Belongs to the peptidase A1 family.

It is found in the secreted. Secreted aspartic protease; part of the gene cluster that mediates the biosynthesis of the mycotoxin fusarin C. Within the cluster, FUS1, FUS2, FUS8 and FUS9 are sufficient for fusarin production. The other FUS cluster members are not essential for fusarin C biosynthesis. This Gibberella fujikuroi (strain CBS 195.34 / IMI 58289 / NRRL A-6831) (Bakanae and foot rot disease fungus) protein is Secreted aspartic protease FUS4.